The following is a 719-amino-acid chain: Alpha-galactosidase 2 (719 aa).

Asp472 (nucleophile) is an active-site residue. Catalysis depends on Asp542, which acts as the Proton donor.

Belongs to the glycosyl hydrolase 36 family.

The enzyme catalyses Hydrolysis of terminal, non-reducing alpha-D-galactose residues in alpha-D-galactosides, including galactose oligosaccharides, galactomannans and galactolipids.. In terms of biological role, alpha-galactosidase associated with the sucrase operon. This Pediococcus pentosaceus protein is Alpha-galactosidase 2 (agaS).